Consider the following 648-residue polypeptide: MVSLLPPQSDVTLPGSTRLEGEPQGDLMQAPGLPDSPAPQNKHANFSCSSFVPDGPPERTPSLPPHSPSIASPDPEQIQGHCTAGPGPGSFRLSPSEKYPGFGFEEGPAGSPGRFLKGNHMPFHPYKRHFHEDIFSEAQTAMALDGHSFKTQGALEAFEEIPVDMGDAEAFLPSFPAEAWCNKLPYPSQEHNQILQGSEVKVKPQALDSGPGMYCYQPPLQHMYCSSQPAFHQYSPGGGSYPVPYLGSPHYPYQRIAPQANAEGHQPLFPKPIYSYSILIFMALKNSKTGSLPVSEIYNFMTEHFPYFKTAPDGWKNSVRHNLSLNKCFEKVENKSGSSSRKGCLWALNPSKIDKMQEELQKWKRKDPIAVRKSMAKPEELDSLIGDKREKLGSPLLGCPPPGLAGPGPIRPMAPSAGLSQPLHPMHPAPGPMPGKNPLQDLLGGHAPSCYGQTYPHLSPSLAPSGHQQPLFPQPDGHLELQAQPGTPQDSPLPAHTPPSHGAKLMAEPSSARTMHDTLLPDGDLGTDLDAINPSLTDFDFQGNLWEQLKDDSLALDPLVLVTSSPTSSSMLPPPPAAHCFPPGPCLAETGNEAGELAPPGSGGSGALGDMHLSTLYSAFVELESTPSSAAAGPAVYLSPGSKPLALA.

Positions 1 to 95 (MVSLLPPQSD…PGPGSFRLSP (95 aa)) are disordered. Residues 38–50 (APQNKHANFSCSS) show a composition bias toward polar residues. Over residues 54–67 (DGPPERTPSLPPHS) the composition is skewed to pro residues. The fork-head DNA-binding region spans 271-367 (KPIYSYSILI…EELQKWKRKD (97 aa)). Disordered stretches follow at residues 392–432 (LGSP…APGP), 457–521 (HLSP…TLLP), and 629–648 (SAAA…LALA). The segment covering 398-412 (GCPPPGLAGPGPIRP) has biased composition (pro residues).

Bone marrow (at protein level). Expressed in thymus and skin.

It localises to the nucleus. Functionally, transcriptional regulator which regulates the development, differentiation, and function of thymic epithelial cells (TECs) both in the prenatal and postnatal thymus. Acts as a master regulator of the TECs lineage development and is required from the onset of differentiation in progenitor TECs in the developing fetus to the final differentiation steps through which TECs mature to acquire their full functionality. Regulates, either directly or indirectly the expression of a variety of genes that mediate diverse aspects of thymus development and function, including MHC Class II, DLL4, CCL25, CTSL, CD40 and PAX1. Regulates the differentiation of the immature TECs into functional cortical TECs (cTECs) and medullary TECs (mTECs). Essential for maintenance of mTECs population in the postnatal thymus. Involved in the morphogenesis and maintenance of the three-dimensional thymic microstructure which is necessary for a fully functional thymus. Plays an important role in the maintenance of hematopoiesis and particularly T lineage progenitors within the bone marrow niche with age. Essential for the vascularization of the thymus anlage. Promotes the terminal differentiation of epithelial cells in the epidermis and hair follicles, partly by negatively regulating the activity of protein kinase C. The sequence is that of Forkhead box protein N1 (Foxn1) from Mus musculus (Mouse).